Reading from the N-terminus, the 242-residue chain is Neuromodulin (242 aa).

The segment at 1–242 (MLCCMRRTKQ…EEREADQEHA (242 aa)) is disordered. S-palmitoyl cysteine attachment occurs at residues cysteine 3 and cysteine 4. Positions 9–32 (KQVEKNDEDQKIEQDGIKPEDKAH) are enriched in basic and acidic residues. An IQ domain is found at 31-60 (AHKAATKIQASFRGHITRKKLKGEKKGDAQ). Residue serine 41 is modified to Phosphoserine; by PHK and PKC. Composition is skewed to basic and acidic residues over residues 66–84 (GNEK…KEGE) and 98–117 (KAEE…KGEG). Over residues 142–157 (ETESATKASTDNSPSS) the composition is skewed to polar residues. 3 positions are modified to phosphoserine: serine 154, serine 156, and serine 157. Residues 158 to 170 (KAEDAPAKEEPKQ) show a composition bias toward basic and acidic residues. Over residues 171 to 203 (ADVPAAVTAAAAATTPAAEDAAAKATAQPPTDA) the composition is skewed to low complexity. Position 185 is a phosphothreonine (threonine 185). A phosphoserine; by CK2 mark is found at serine 206 and serine 207. A compositionally biased stretch (basic and acidic residues) spans 209-242 (AEEKIEAVDETKPKESARQDEGKGEEREADQEHA).

This sequence belongs to the neuromodulin family. Identified in a complex containing FGFR4, NCAM1, CDH2, PLCG1, FRS2, SRC, SHC1, GAP43 and CTTN. Interacts (via IQ domain) with calmodulin. Binds calmodulin with a greater affinity in the absence of Ca(2+) than in its presence. Phosphorylated. Phosphorylation of this protein by a protein kinase C is specifically correlated with certain forms of synaptic plasticity. Post-translationally, palmitoylated by ZDHHC3. Palmitoylation is regulated by ARF6 and is essential for plasma membrane association and axonal and dendritic filopodia induction. Deacylated by LYPLA2.

It is found in the cell membrane. The protein resides in the cell projection. It localises to the growth cone membrane. The protein localises to the synapse. Its subcellular location is the filopodium membrane. It is found in the perikaryon. The protein resides in the dendrite. It localises to the axon. The protein localises to the cytoplasm. In terms of biological role, this protein is associated with nerve growth. It is a major component of the motile 'growth cones' that form the tips of elongating axons. Plays a role in axonal and dendritic filopodia induction. This chain is Neuromodulin (GAP43), found in Felis catus (Cat).